A 102-amino-acid polypeptide reads, in one-letter code: Sulfur globule protein CV3 (102 aa).

The first 25 residues, 1-25, serve as a signal peptide directing secretion; it reads MTMKRLLLVSTLAGASALATLPANA.

The protein envelope of the sulfur globules is composed of the three different proteins CV1, CV2 and CV3.

Functionally, structural protein of the sulfur globules, which are intracellular globules that serve for sulfur storage in purple sulfur bacteria. In Allochromatium vinosum (strain ATCC 17899 / DSM 180 / NBRC 103801 / NCIMB 10441 / D) (Chromatium vinosum), this protein is Sulfur globule protein CV3 (sgpC).